A 78-amino-acid chain; its full sequence is MLSNSLCPRLTNSLILSKLILVYQLFIFTGALIMDKQKVNNNIVEEENLSKEKEIGGIKGLEPTRYGDWQHKGKVTDF.

Belongs to the SDHAF4 family.

In Rickettsia prowazekii (strain Madrid E), this protein is UPF0369 protein RP167.